A 252-amino-acid polypeptide reads, in one-letter code: 1-(5-phosphoribosyl)-5-[(5-phosphoribosylamino)methylideneamino] imidazole-4-carboxamide isomerase (252 aa).

Asp-10 functions as the Proton acceptor in the catalytic mechanism. Asp-129 serves as the catalytic Proton donor.

It belongs to the HisA/HisF family.

Its subcellular location is the cytoplasm. It catalyses the reaction 1-(5-phospho-beta-D-ribosyl)-5-[(5-phospho-beta-D-ribosylamino)methylideneamino]imidazole-4-carboxamide = 5-[(5-phospho-1-deoxy-D-ribulos-1-ylimino)methylamino]-1-(5-phospho-beta-D-ribosyl)imidazole-4-carboxamide. Its pathway is amino-acid biosynthesis; L-histidine biosynthesis; L-histidine from 5-phospho-alpha-D-ribose 1-diphosphate: step 4/9. The protein is 1-(5-phosphoribosyl)-5-[(5-phosphoribosylamino)methylideneamino] imidazole-4-carboxamide isomerase of Frankia casuarinae (strain DSM 45818 / CECT 9043 / HFP020203 / CcI3).